Here is a 318-residue protein sequence, read N- to C-terminus: Phospholipid scramblase 1 (318 aa).

Positions 1–14 (MDKQNSQMNASHPE) are enriched in polar residues. The interval 1 to 64 (MDKQNSQMNA…GPGPAGFPVP (64 aa)) is disordered. Positions 1–84 (MDKQNSQMNA…NQPVGAAGVP (84 aa)) are proline-rich domain (PRD). The Cytoplasmic segment spans residues 1-288 (MDKQNSQMNA…IQFPLDLDVK (288 aa)). Residues 18–26 (PVGYPPQYP) carry the SH3-binding 1 motif. 2 consecutive short sequence motifs (PPXY motif) follow at residues 22-25 (PPQY) and 33-36 (PPGY). Residues 31-44 (QGPPGYSGYPGPQV) show a composition bias toward low complexity. Residues 42–50 (PQVSYPPPP) carry the SH3-binding 2 motif. Residues Tyr69 and Tyr74 each carry the phosphotyrosine; by ABL modification. The short motif at 84 to 92 (PWMPAPQPP) is the SH3-binding 3 element. Positions 99 to 290 (LEYLSQIDQI…FPLDLDVKMK (192 aa)) are interaction with hepatitis C virus E2 glycoprotein. Thr161 bears the Phosphothreonine; by PKC/PRKCD mark. Residues Cys184, Cys185, Cys186, Cys188, and Cys189 are each lipidated (S-palmitoyl cysteine). Residues 257 to 266 (GKISKHWTGI) carry the Nuclear localization signal motif. A helical membrane pass occupies residues 289–305 (MKAVMIGACFLIDFMFF). Residues 306-318 (ESTGSQEQKSGVW) lie on the Extracellular side of the membrane.

It belongs to the phospholipid scramblase family. Forms homooligomers in the presence of calcium. Interacts with ABL. Interacts with RELT, RELL1 and RELL2. Interacts with OXSR1 in the presence of RELT. Interacts with TOP2A and TOP2B. Interacts with OCLN. Interacts with TRPC5. Interacts with TRPC1 and TRPC4. Interacts with ILDR1. As to quaternary structure, (Microbial infection) Interacts with hepatitis C virus E1 and E2 glycoproteins. In terms of assembly, (Microbial infection) Interacts with T-cell leukemia virus (HTLV)-1 protein Tax (via N-terminus); this interaction represses Tax homodimerization. (Microbial infection) Interacts with HIV-1 protein Tat; this interaction represses the Tat-dependent transactivation of the HIV-1 long terminal repeat (LTR) and reduces the nuclear translocation of Tat. As to quaternary structure, (Microbial infection) Interacts with hepatitis B virus protein HBx; this interaction promotes the proteasomal degradation of HBx. In terms of assembly, (Microbial infection) Interacts with human cytomegalovirus proteins IE1 and IE2. (Microbial infection) Interacts with Epstein Barr virus (EBV) lytic switch protein BZLF1; this interaction negatively regulates the transcriptional regulatory activity of BZLF1 by preventing the formation of the BZLF1-CBP complex. As to quaternary structure, (Microbial infection) Interacts with influenza virus nucleoprotein NP. Ca(2+) serves as cofactor. Requires Mg(2+) as cofactor. It depends on Zn(2+) as a cofactor. In terms of processing, phosphorylation at Thr-161 by PKC/PKCD increases its phospholipid scramblase activity during both cell stimulation and apoptosis. Phosphorylated by OXSR1 in the presence of RELT. Post-translationally, palmitoylation is required for its phospholipid scramblase activity. Palmitoylation regulates its localization to the cell membrane or the nucleus; trafficking to the cell membrane is dependent upon palmitoylation whereas in the absence of palmitoylation, localizes to the nucleus. Expressed in platelets, erythrocyte membranes, lymphocytes, spleen, thymus, prostate, testis, uterus, intestine, colon, heart, placenta, lung, liver, kidney and pancreas. Not detected in brain and skeletal muscle.

It localises to the cell membrane. Its subcellular location is the nucleus. The protein localises to the cytoplasm. The protein resides in the perinuclear region. The catalysed reaction is a 1,2-diacyl-sn-glycero-3-phosphocholine(in) = a 1,2-diacyl-sn-glycero-3-phosphocholine(out). The enzyme catalyses a 1,2-diacyl-sn-glycero-3-phosphoethanolamine(in) = a 1,2-diacyl-sn-glycero-3-phosphoethanolamine(out). It carries out the reaction a 1,2-diacyl-sn-glycero-3-phospho-L-serine(in) = a 1,2-diacyl-sn-glycero-3-phospho-L-serine(out). Activated by Pb(2+) and Hg(2+) ions. Phosphorylation at Thr-161 by PKC/PKCD increases its phospholipid scramblase activity during both cell stimulation and apoptosis. Functionally, catalyzes calcium-induced ATP-independent rapid bidirectional and non-specific movement of phospholipids (lipid scrambling or lipid flip-flop) between the inner and outer leaflet of the plasma membrane resulting in collapse of the phospholipid asymmetry which leads to phosphatidylserine externalization on the cell surface. Mediates calcium-dependent phosphatidylserine externalization and apoptosis in neurons via its association with TRPC5. Also exhibits magnesium-dependent nuclease activity against double-stranded DNA and RNA but not single-stranded DNA and can enhance DNA decatenation mediated by TOP2A. Negatively regulates FcR-mediated phagocytosis in differentiated macrophages. May contribute to cytokine-regulated cell proliferation and differentiation. May play a role in the antiviral response of interferon (IFN) by amplifying and enhancing the IFN response through increased expression of select subset of potent antiviral genes. Inhibits the functions of viral transactivators, including human T-cell leukemia virus (HTLV)-1 protein Tax, human immunodeficiency virus (HIV)-1 Tat, human hepatitis B virus (HBV) HBx, Epstein-Barr virus (EBV) BZLF1 and human cytomegalovirus IE1 and IE2 proteins through direct interactions. Also mediates the inhibition of influenza virus infection by preventing nuclear import of the viral nucleoprotein/NP. Plays a crucial role as a defense factor against SARS-CoV-2 independently of its scramblase activity by directly targeting nascent viral vesicles to prevent virus-membrane fusion and the release of viral RNA into the host-cell cytosol. In terms of biological role, (Microbial infection) Acts as an attachment receptor for HCV. The polypeptide is Phospholipid scramblase 1 (PLSCR1) (Homo sapiens (Human)).